The following is a 225-amino-acid chain: ATP-dependent dethiobiotin synthetase BioD (225 aa).

ATP is bound at residue 12–17 (EIGKTY). A Mg(2+)-binding site is contributed by Thr16. Residue Lys37 is part of the active site. Substrate is bound at residue Ser41. Residues Asp55, 122–125 (EGVG), and 182–183 (SE) each bind ATP. Asp55 and Glu122 together coordinate Mg(2+).

Belongs to the dethiobiotin synthetase family. Homodimer. Mg(2+) is required as a cofactor.

The protein resides in the cytoplasm. It carries out the reaction (7R,8S)-7,8-diammoniononanoate + CO2 + ATP = (4R,5S)-dethiobiotin + ADP + phosphate + 3 H(+). It functions in the pathway cofactor biosynthesis; biotin biosynthesis; biotin from 7,8-diaminononanoate: step 1/2. Its function is as follows. Catalyzes a mechanistically unusual reaction, the ATP-dependent insertion of CO2 between the N7 and N8 nitrogen atoms of 7,8-diaminopelargonic acid (DAPA, also called 7,8-diammoniononanoate) to form a ureido ring. The protein is ATP-dependent dethiobiotin synthetase BioD of Methylobacterium nodulans (strain LMG 21967 / CNCM I-2342 / ORS 2060).